Reading from the N-terminus, the 244-residue chain is TETETTSFSIPKTDQPSSPKFVSGQPNLIFQGNAYSTDGKLILTEAKQNTVGRALYSAPIHIWDRKTGKVADFTASFTFYIRPNSDSQVVADGFTFFIAPVDTQPRGDGGLLGVFNREEYDPTIHTVAVEFDTFHNQPWDPDYIHIGVDINSIKSRITRPWNPHYDTYSIAYIAYKAATNELDVTVTYPNSRDYATLREVVDLKQIVPEWVRVGLSASTATYYSAHEVYSWSFHSELGGTSSSN.

A disordered region spans residues 1–20; the sequence is TETETTSFSIPKTDQPSSPK.

It belongs to the leguminous lectin family. In terms of assembly, homodimer. In contrast to other Lathyrus lectins which are tetramer of two alpha and two beta chains.

This chain is Lectin, found in Lathyrus sphaericus (Spring vetchling).